Reading from the N-terminus, the 325-residue chain is TNFAIP3-interacting protein 3 (325 aa).

2 disordered regions span residues 1 to 30 (MAHFVQGTSRMIAAESSTEHKECAEPSTRK) and 84 to 129 (RFLS…RLNE). Residues 17-28 (STEHKECAEPST) show a composition bias toward basic and acidic residues. Positions 27 to 265 (STRKNLMNSL…LEKQLKQMYC (239 aa)) form a coiled coil. Residues 190–248 (HEEMRTEMEVLKQQVQIYEEDFKKERSDRERLNQEKEELQQINETSQSQLNRLNSQIKA) are ubiquitin-binding domain (UBD).

In terms of assembly, interacts with TNFAIP3. Interacts with polyubiquitin. Highly expressed in lung, lymph node, thymus and fetal liver. Expressed at lower levels in bone marrow, brain, kidney, spleen, leukocytes and tonsils. Could be detected in heart, salivary gland, adrenal gland, pancreas, ovary and fetal brain. High levels detected in liver, colon, small intestine, muscle, stomach, testis, placenta, thyroid, uterus, prostate, skin and PBL.

Binds to zinc finger protein TNFAIP3 and inhibits NF-kappa-B activation induced by tumor necrosis factor, Toll-like receptor 4 (TLR4), interleukin-1 and 12-O-tetradecanoylphorbol-13-acetate. Overexpression inhibits NF-kappa-B-dependent gene expression in response to lipopolysaccharide at a level downstream of TRAF6 and upstream of IKBKB. NF-kappa-B inhibition is independent of TNFAIP3 binding. The sequence is that of TNFAIP3-interacting protein 3 from Homo sapiens (Human).